The following is a 428-amino-acid chain: MCDVVLGSQWGDEGKGKLVDLLCDDIDVCARCQGGNNAGHTIVVGKVKYDFHMLPSGLVNPKCQNLVGSGVVIHVPSFFAELENLEAKGLDCRDRLFVSSRAHLVFDFHQRTDKLKEAELSTNKKSIGTTGKGIGPTYSTKASRSGIRVHHLVNPDPEAWEEFKTRYLRLVESRQKRYGEFEYDPKEELARFEKYRETLRPFVVDSVNFMHEAIAANKKILVEGANALMLDIDFGTYPYVTSSSTGIGGVLTGLGIPPRTIRNVYGVVKAYTTRVGEGPFPTEQLNKVGETLQDVGAEYGVTTGRKRRCGWLDLVVLKYSNSINGYTSLNITKLDVLDKFKEIEVGVAYKLNGKELPSFPEDLIDLAKVEVVYKKFPGWEQDITGIKKYEDLPENAKNYLKFIEDYLQVPIQWVGTGPARDSMLEKKI.

Residues 11–17 (GDEGKGK) and 39–41 (GHT) contribute to the GTP site. Asp12 serves as the catalytic Proton acceptor. Residues Asp12 and Gly39 each coordinate Mg(2+). Residues 12-15 (DEGK), 37-40 (NAGH), Thr130, Arg144, Asn226, Thr241, and Arg305 contribute to the IMP site. Residue His40 is the Proton donor of the active site. 301 to 307 (VTTGRKR) lines the substrate pocket. Residues Arg307, 333–335 (KLD), and 415–417 (GTG) contribute to the GTP site.

Belongs to the adenylosuccinate synthetase family. As to quaternary structure, homodimer. It depends on Mg(2+) as a cofactor.

The protein resides in the cytoplasm. It carries out the reaction IMP + L-aspartate + GTP = N(6)-(1,2-dicarboxyethyl)-AMP + GDP + phosphate + 2 H(+). It participates in purine metabolism; AMP biosynthesis via de novo pathway; AMP from IMP: step 1/2. Plays an important role in the de novo pathway and in the salvage pathway of purine nucleotide biosynthesis. Catalyzes the first committed step in the biosynthesis of AMP from IMP. The sequence is that of Adenylosuccinate synthetase from Candida albicans (strain SC5314 / ATCC MYA-2876) (Yeast).